Reading from the N-terminus, the 240-residue chain is Protein CDV3 homolog A (240 aa).

Basic and acidic residues predominate over residues 1–15 (MAEPQEKSLDDFFAK). The segment at 1–204 (MAEPQEKSLD…TESRREKEME (204 aa)) is disordered. Alanine 2 is modified (N-acetylalanine). Low complexity predominate over residues 27–52 (SGSAAGSRGSARPPDGAPSSSSSMSG). Over residues 57–73 (VKKEKSGKSDNPDQLQE) the composition is skewed to basic and acidic residues. Polar residues-rich tracts occupy residues 127–141 (DKSSGPWNKTSQAQA) and 181–192 (SDTQFPSLQATA). Residues 193 to 204 (KHTESRREKEME) show a composition bias toward basic and acidic residues.

The protein belongs to the CDV3 family.

Its subcellular location is the cytoplasm. The protein is Protein CDV3 homolog A (cdv3-a) of Xenopus laevis (African clawed frog).